An 82-amino-acid chain; its full sequence is Beta-defensin 113 (82 aa).

The first 16 residues, 1–16 (MKILCIFLTFVFTVSC), serve as a signal peptide directing secretion. Disulfide bonds link Cys35-Cys61, Cys42-Cys56, and Cys46-Cys62.

Belongs to the beta-defensin family.

Its subcellular location is the secreted. Has antibacterial activity. The sequence is that of Beta-defensin 113 (DEFB113) from Homo sapiens (Human).